An 849-amino-acid polypeptide reads, in one-letter code: Thrombospondin type-1 domain-containing protein 1 (849 aa).

A signal peptide spans 1-24 (MKQTLKDFSNLLLVVLCDYVLGEA). Residues 25–413 (EHLVLGEPGH…QPQAPVKSNN (389 aa)) lie on the Extracellular side of the membrane. N-linked (GlcNAc...) asparagine glycosylation is found at N39, N50, N55, N66, N77, N106, and N303. In terms of domain architecture, TSP type-1 spans 340 to 393 (IETWGLWQPWSQCSASCGDGVRERRRVCLTSSPSRPGCPGMSSETSPCSLEDCA). 3 cysteine pairs are disulfide-bonded: C352–C387, C356–C392, and C367–C377. The helical transmembrane segment at 414–434 (VVTVTGISLCLFIIVATVLIT) threads the bilayer. Topologically, residues 435 to 849 (LWRKLGRAPK…STLSVEKLVI (415 aa)) are cytoplasmic. Position 463 is a phosphoserine (S463). 3 disordered regions span residues 472–516 (SEPR…SESF), 595–799 (KSPF…KCQS), and 828–849 (GYFG…KLVI). A compositionally biased stretch (low complexity) spans 479-493 (SDAGDGPAGSPGDPG). Residues 636–651 (SQVRSHSRGSHFRRTA) are compositionally biased toward basic residues. A compositionally biased stretch (basic and acidic residues) spans 652 to 666 (SFHEARQARPFRERS). Pro residues predominate over residues 720–732 (SPLPKPHSLGPPP).

In terms of assembly, part of a complex composed of THSD1, PTK2/FAK1, TLN1 and VCL. Interacts with TLN1.

It localises to the endosome membrane. The protein localises to the cell junction. Its subcellular location is the focal adhesion. Is a positive regulator of nascent focal adhesion assembly, involved in the modulation of endothelial cell attachment to the extracellular matrix. The polypeptide is Thrombospondin type-1 domain-containing protein 1 (THSD1) (Bos taurus (Bovine)).